We begin with the raw amino-acid sequence, 454 residues long: Protein disulfide-isomerase TMX3 (454 aa).

The N-terminal stretch at 1–24 (MAAWKSWTALRLCATVVVLDMVVC) is a signal peptide. The 104-residue stretch at 25 to 128 (KGFVEDLDES…KDDIIEFAHR (104 aa)) folds into the Thioredoxin domain. At 25 to 375 (KGFVEDLDES…TIVSIFKSSP (351 aa)) the chain is on the lumenal side. Catalysis depends on nucleophile residues C53 and C56. Cysteines 53 and 56 form a disulfide. N258 and N313 each carry an N-linked (GlcNAc...) asparagine glycan. The helical transmembrane segment at 376-396 (LMGCFLFGLPLGVISIMCYGI) threads the bilayer. The Cytoplasmic segment spans residues 397–454 (YTADTDGGYIEERYEVSKSENENQEQIEESKEQQEPSSGGSVVPTVQEPKDVLEKKKD). The interval 412–454 (VSKSENENQEQIEESKEQQEPSSGGSVVPTVQEPKDVLEKKKD) is disordered. The segment covering 444–454 (EPKDVLEKKKD) has biased composition (basic and acidic residues). The short motif at 451 to 454 (KKKD) is the Di-lysine motif element.

Belongs to the protein disulfide isomerase family. N-glycosylated. In terms of tissue distribution, widely expressed. Expressed in brain, testis, lung, skin, kidney, uterus, bone, stomach, liver, prostate, placenta, eye and muscle.

It is found in the endoplasmic reticulum membrane. The catalysed reaction is Catalyzes the rearrangement of -S-S- bonds in proteins.. Probable disulfide isomerase, which participates in the folding of proteins containing disulfide bonds. May act as a dithiol oxidase. Acts as a regulator of endoplasmic reticulum-mitochondria contact sites via its ability to regulate redox signals. The polypeptide is Protein disulfide-isomerase TMX3 (TMX3) (Homo sapiens (Human)).